Consider the following 9702-residue polypeptide: Nonribosomal peptide synthetase ungA (9702 aa).

The interval 248–647 (EQAQLRPHAP…ARKDTQVKIR (400 aa)) is adenylation 1. The 78-residue stretch at 775-852 (APQTEMEYRL…MARAAQEKQT (78 aa)) folds into the Carrier 1 domain. Ser812 carries the O-(pantetheine 4'-phosphoryl)serine modification. Residues 891-1288 (DILPCTPLQE…EAVLRHVCSQ (398 aa)) are condensation 1. The segment at 1330-1730 (QRTQQQPDAP…GRKDTQVKIR (401 aa)) is adenylation 2. The 77-residue stretch at 1857–1933 (LPQSPMEKSL…RLARREIQTD (77 aa)) folds into the Carrier 2 domain. Ser1894 bears the O-(pantetheine 4'-phosphoryl)serine mark. Residues 1946 to 2374 (PFALSPIQQF…ERALEGTAVQ (429 aa)) are epimerization 1. The interval 2414-2842 (EDIYPCSPLQ…LDTAILSPQD (429 aa)) is condensation 2. The adenylation 3 stretch occupies residues 2868 to 3267 (QVERQPDALA…GRKDTQVKIR (400 aa)). A Carrier 3 domain is found at 3397 to 3473 (APTTEMERHL…EMSQVAKLGS (77 aa)). The residue at position 3434 (Ser3434) is an O-(pantetheine 4'-phosphoryl)serine. Residues 3512-3920 (EDVFPCTPLQ…LLCDASHHQS (409 aa)) form a condensation 3 region. Residues 3957-4361 (KQTQRRSAAQ…GRKDAQVKIR (405 aa)) form an adenylation 4 region. Residues 4491-4568 (PPTTDLERQI…LALSVSAAVD (78 aa)) enclose the Carrier 4 domain. Residue Ser4528 is modified to O-(pantetheine 4'-phosphoryl)serine. An epimerization 2 region spans residues 4583–5013 (ALSPIQQMFA…QAAAQALPLL (431 aa)). The tract at residues 5049–5474 (VEDIYPCSPL…ANIISHQDLE (426 aa)) is condensation 4. Residues 5496-5899 (MQQAESQPGA…GRKDNQVKIH (404 aa)) form an adenylation 5 region. The Carrier 5 domain occupies 6033–6110 (TASSPEELEL…LVSHAQGNTA (78 aa)). Ser6070 is subject to O-(pantetheine 4'-phosphoryl)serine. An epimerization 3 region spans residues 6127-6551 (ELSPIQQLFF…CKSSLEAAAA (425 aa)). The tract at residues 6593–6935 (VEDIYPCAPI…TGISVQGGAA (343 aa)) is condensation 5. The tract at residues 7047–7447 (KRPDAPAIDA…GRRDNQVKVR (401 aa)) is adenylation 6. The Carrier 6 domain maps to 7575–7655 (GPQTEVERLL…RSARTVQGHV (81 aa)). Ser7613 carries the O-(pantetheine 4'-phosphoryl)serine modification. Residues 7670 to 8106 (DLAPVQQMFA…LVTASELLMQ (437 aa)) form an epimerization 4 region. Positions 8144 to 8588 (VEDIYPCSPI…EVDLSTDHDQ (445 aa)) are condensation 6. An adenylation 7 region spans residues 8612–9025 (NTVQKQPHST…GRKDSQVKIR (414 aa)). The Carrier 7 domain occupies 9158–9236 (SPTAPMERRL…LALLVREGDA (79 aa)). Residue Ser9196 is modified to O-(pantetheine 4'-phosphoryl)serine. The interval 9282–9629 (DVYPTTDLQN…DNLEHDPGTA (348 aa)) is condensation 7.

It belongs to the NRP synthetase family.

It participates in secondary metabolite biosynthesis. Nonribosomal peptide synthetase; part of the gene cluster that mediates the biosynthesis of the unguisins, gamma-aminobutyric acid (GABA)-containing fungal cyclic heptapeptides with the amino acid sequence cyclo-(D-Ala1-D-Val2-L-Phe3-D-Val4-D-Ala5-D-Trp6-GABA7) for unguisin A and cyclo-(D-Ala1-D-Val2-L-Leu3-D-Val4-D-Ala5-D-Trp6-GABA7) for unguisin B. UngA is the main enzyme within the cluster which condenses the 7 residues using its respective 7 modules. The terminal condensation domain (Ct) is involved in cyclization with D-alanine and thereby releasing of unguisins A and B. The alanine racemase ungC provides D-alanine, which is then accepted by the first adenylation domain of ungA. Finally, the hydrolase ungD catalyzes the hydrolysis between the D-tryptophan and GABA residues of unguisins A and B to produce the corresponding linear peptides. The sequence is that of Nonribosomal peptide synthetase ungA from Aspergillus violaceofuscus (strain CBS 115571).